Here is a 1708-residue protein sequence, read N- to C-terminus: 187-kDa microtubule-associated protein AIR9 (1708 aa).

Polar residues predominate over residues 67–93 (SSLRVSGTTPVTIRRNSTGGVTENLAG). Residues 67–255 (SSLRVSGTTP…KTSTPESRDS (189 aa)) form a disordered region. The segment covering 110-121 (DPVRRSLPELRK) has biased composition (basic and acidic residues). Residues 122–134 (SSVSSLSAKTVSK) are compositionally biased toward low complexity. Residues 149 to 165 (GSRSLTKSTGFSLSKPE) are compositionally biased toward polar residues. Residues 173-234 (SVSVSSKRAP…SIRSKSFSSP (62 aa)) show a composition bias toward low complexity. LRR repeat units follow at residues 267–290 (AGDDMRLDLRGHRIRSLTSGGLHL), 291–315 (SPNLEFVYLRDNLLSTLEGIEILNR), 316–335 (VKVLDLSFNDFKGPGFEPLE), 337–359 (CKMLQQLYLAGNQITSLASLPQL), 360–382 (PNLEFLSVAQNKLKSLAMASQPR), 384–402 (QVLAASKNKITTLKDFPYL), and 403–425 (PVLEHLRVEENPLLKISHLEAAS). A9 repeat units lie at residues 489–584 (PSGY…FAIS), 601–682 (LNGE…QYKY), 698–777 (ITGD…VSTS), 793–878 (IVGD…VYVL), 895–977 (ITGD…RSCM), 994–1073 (VVGA…AISE), 1090–1167 (FLGS…RSIR), 1183–1272 (IPDC…VVVI), 1287–1365 (VRVK…KMSE), 1382–1473 (FTGK…AYAE), and 1489–1569 (IEGQ…VSAS).

Interacts with KCBP. As to expression, strongly expressed in dividing cells, like the meristemic region of the root tip.

Its subcellular location is the cytoplasm. The protein localises to the cell cortex. The protein resides in the cytoskeleton. It is found in the phragmoplast. Microtubule-associated protein that may be involved in the maturation of cell plates and proper insertion of cross-walls after cytokinesis. This is 187-kDa microtubule-associated protein AIR9 from Arabidopsis thaliana (Mouse-ear cress).